Reading from the N-terminus, the 512-residue chain is Aldehyde dehydrogenase B (512 aa).

Active-site residues include Glu268 and Cys307.

Homotetramer.

The catalysed reaction is an aldehyde + NADP(+) + H2O = a carboxylate + NADPH + 2 H(+). It catalyses the reaction acetaldehyde + NADP(+) + H2O = acetate + NADPH + 2 H(+). The enzyme catalyses chloroacetaldehyde + NADP(+) + H2O = chloroacetate + NADPH + 2 H(+). It carries out the reaction propanal + NADP(+) + H2O = propanoate + NADPH + 2 H(+). With respect to regulation, magnesium increases enzyme activity with various substrates. Functionally, catalyzes the NADP(+)-dependent oxidation of diverse aldehydes to their corresponding carboxylic acids, with a preference for acetaldehyde and chloroacetaldehyde. May play a role in detoxifying aldehydes present during stationary phase. Cannot use NAD(+) instead of NADP(+) as the electron acceptor. To a lesser extent is also able to oxidize propionaldehyde (propanal), benzaldehyde, mafosfamide, and 4-hydroperoxycyclophosphamide. Does not use either glyceraldehyde or glycolaldehyde as substrates. The polypeptide is Aldehyde dehydrogenase B (Escherichia coli (strain K12)).